A 128-amino-acid polypeptide reads, in one-letter code: Aspartate 1-decarboxylase (128 aa).

S25 functions as the Schiff-base intermediate with substrate; via pyruvic acid in the catalytic mechanism. Pyruvic acid (Ser) is present on S25. T57 contributes to the substrate binding site. Residue Y58 is the Proton donor of the active site. 73-75 (GSA) contacts substrate.

Belongs to the PanD family. Heterooctamer of four alpha and four beta subunits. It depends on pyruvate as a cofactor. Is synthesized initially as an inactive proenzyme, which is activated by self-cleavage at a specific serine bond to produce a beta-subunit with a hydroxyl group at its C-terminus and an alpha-subunit with a pyruvoyl group at its N-terminus.

It localises to the cytoplasm. It carries out the reaction L-aspartate + H(+) = beta-alanine + CO2. It functions in the pathway cofactor biosynthesis; (R)-pantothenate biosynthesis; beta-alanine from L-aspartate: step 1/1. Catalyzes the pyruvoyl-dependent decarboxylation of aspartate to produce beta-alanine. The protein is Aspartate 1-decarboxylase of Burkholderia thailandensis (strain ATCC 700388 / DSM 13276 / CCUG 48851 / CIP 106301 / E264).